The chain runs to 139 residues: Nuclear transcription factor Y subunit B-4 (139 aa).

A DNA-binding region spans residues 8 to 14 (LPIANVG). The subunit association domain (SAD) stretch occupies residues 35–46 (VQECATEFISFV). The segment covering 90–115 (YREAERERTEHNKGSNDSGNEKETNT) has biased composition (basic and acidic residues). The segment at 90–139 (YREAERERTEHNKGSNDSGNEKETNTRSDVQNQSTKFIRVVEKGSSSSAR) is disordered. Polar residues predominate over residues 116-125 (RSDVQNQSTK).

Belongs to the NFYB/HAP3 subunit family. In terms of assembly, heterotrimeric transcription factor composed of three components, NF-YA, NF-YB and NF-YC. NF-YB and NF-YC must interact and dimerize for NF-YA association and DNA binding. In terms of tissue distribution, expressed in flowers, siliques and young rosettes.

The protein localises to the nucleus. In terms of biological role, component of the NF-Y/HAP transcription factor complex. The NF-Y complex stimulates the transcription of various genes by recognizing and binding to a CCAAT motif in promoters. This is Nuclear transcription factor Y subunit B-4 (NFYB4) from Arabidopsis thaliana (Mouse-ear cress).